Reading from the N-terminus, the 578-residue chain is MGSCCSCLKDSSDEASVSPIADNEREAVTLLLGYLEDKDQLDFYSGGPLKALTTLVYSDNLNLQRSAALAFAEITEKYVRQVSREVLEPILILLQSQDPQIQVAACAALGNLAVNNENKLLIVEMGGLEPLINQMMGDNVEVQCNAVGCITNLATRDDNKHKIATSGALIPLTKLAKSKHIRVQRNATGALLNMTHSEENRKELVNAGAVPVLVSLLSSTDPDVQYYCTTALSNIAVDEANRKKLAQTEPRLVSKLVSLMDSPSSRVKCQATLALRNLASDTSYQLEIVRAGGLPHLVKLIQSDSIPLVLASVACIRNISIHPLNEGLIVDAGFLKPLVRLLDYKDSEEIQCHAVSTLRNLAASSEKNRKEFFESGAVEKCKELALDSPVSVQSEISACFAILALADVSKLDLLEANILDALIPMTFSQNQEVSGNAAAALANLCSRVNNYTKIIEAWDRPNEGIRGFLIRFLKSDYATFEHIALWTILQLLESHNDKVEDLVKNDDDIINGVRKMADVTFERLQRSGIDVKNPGSNNNPSSNDNNSNNNDTGSEHQPVEDASLELYNITQQILQFLH.

G2 is lipidated: N-myristoyl glycine. Residues C4, C5, and C7 are each lipidated (S-palmitoyl cysteine). 2 positions are modified to phosphoserine: S11 and S16. 9 ARM repeats span residues 37–75 (DKDQ…AEIT), 76–114 (EKYV…NLAV), 116–155 (NENK…NLAT), 157–196 (DDNK…NMTH), 198–237 (EENR…NIAV), 239–280 (EANR…NLAS), 282–321 (TSYQ…NISI), 323–363 (PLNE…NLAA), and 407–446 (DVSK…NLCS). K77 participates in a covalent cross-link: Glycyl lysine isopeptide (Lys-Gly) (interchain with G-Cter in ubiquitin). Residue K515 forms a Glycyl lysine isopeptide (Lys-Gly) (interchain with G-Cter in ubiquitin) linkage. Positions 527–557 (SGIDVKNPGSNNNPSSNDNNSNNNDTGSEHQ) are disordered. Over residues 533 to 552 (NPGSNNNPSSNDNNSNNNDT) the composition is skewed to low complexity.

Belongs to the beta-catenin family. In terms of assembly, interacts with NVJ1. Forms heterotetramers of two VAC8 and two NVJ1 or two VAC8 and two ATG13. Post-translationally, palmitoylated on one or more of its N-terminal cysteine residues by PFA3, which is required for vacuole fusion.

Its subcellular location is the vacuole membrane. Functionally, functions in both vacuole inheritance and protein targeting from the cytoplasm to vacuole (cvt). Involved in the formation of nucleus-vacuole junctions (NVJs) during piecemeal microautophagy of the nucleus (PMN). NVJs are interorganelle interfaces mediated by NVJ1 in the nuclear envelope and VAC8 on the vacuole membrane. Together, NVJ1 and VAC8 form Velcro-like patches through which teardrop-like portions of the nucleus are pinched off into the vacuolar lumen and degraded by the PMN process. The protein is Vacuolar protein 8 (VAC8) of Saccharomyces cerevisiae (strain ATCC 204508 / S288c) (Baker's yeast).